The sequence spans 146 residues: Hemoglobin subunit beta (146 aa).

The Globin domain maps to 2-146 (HWTADEKQLI…VAHALALGYH (145 aa)). The heme b site is built by H63 and H92.

Belongs to the globin family. Heterotetramer of two alpha chains and two beta chains. Red blood cells.

In terms of biological role, involved in oxygen transport from the lung to the various peripheral tissues. This is Hemoglobin subunit beta (HBB) from Chrysemys picta bellii (Western painted turtle).